The chain runs to 149 residues: Glutamyl-tRNA(Gln) amidotransferase subunit C, mitochondrial (149 aa).

It belongs to the GatC family. Subunit of the heterotrimeric GatCAB amidotransferase (AdT) complex, composed of A, B and C subunits.

It localises to the mitochondrion. The enzyme catalyses L-glutamyl-tRNA(Gln) + L-glutamine + ATP + H2O = L-glutaminyl-tRNA(Gln) + L-glutamate + ADP + phosphate + H(+). Functionally, allows the formation of correctly charged Gln-tRNA(Gln) through the transamidation of misacylated Glu-tRNA(Gln) in the mitochondria. The reaction takes place in the presence of glutamine and ATP through an activated gamma-phospho-Glu-tRNA(Gln). The chain is Glutamyl-tRNA(Gln) amidotransferase subunit C, mitochondrial from Trichoplax adhaerens (Trichoplax reptans).